A 345-amino-acid chain; its full sequence is Mitochondrial metalloendopeptidase OMA1 (345 aa).

The Mitochondrial matrix segment spans residues 1 to 67; that stretch reads MLRNIIRFKG…ILLDKSSRKY (67 aa). A helical transmembrane segment spans residues 68–88; sequence LALLFGGCSLFYYTHLDKAPV. Residues 89–345 lie on the Mitochondrial intermembrane side of the membrane; the sequence is SDRSRFIWVS…GNYYKSFFSM (257 aa). Residue His203 coordinates Zn(2+). Residue Glu204 is part of the active site. The Zn(2+) site is built by His207 and Glu257. A disulfide bridge connects residues Cys272 and Cys332. The tract at residues 314 to 345 is required for protease activation; the sequence is ENMSKWLPKANEIYEQSDCSSMGNYYKSFFSM.

The protein belongs to the peptidase M48 family. In terms of assembly, homooligomer. Zn(2+) is required as a cofactor. In terms of processing, forms a redox-dependent disulfide bond, which plays a structural role and regulates its conformational stability and activity.

The protein localises to the mitochondrion inner membrane. With respect to regulation, protease activity is induced in response to various mitochondrial stress, such as changes in membrane potential, oxidative stress or chronic hyperpolarization, and depends on its C-terminal region. In terms of biological role, protease that is part of the quality control system in the inner membrane of mitochondria. Activated in response to various mitochondrial stress, leading to the proteolytic cleavage of target proteins, such as OXA1 and COX1. Cleaves and thereby promotes the turnover of mistranslated or misfolded membrane proteins. Cleaves the misfolded multi-pass membrane protein OXA1. Involved in quality control of cytochrome oxidase assembly: mediates the cleavage of COX1 in cells lacking COA2. Required for the stability of the respiratory supercomplexes. Required for TOR signaling. The polypeptide is Mitochondrial metalloendopeptidase OMA1 (Saccharomyces cerevisiae (strain ATCC 204508 / S288c) (Baker's yeast)).